The chain runs to 356 residues: MGFVRPVCMTILFLLIVFVLSAPSSAMDLPATSGGHNRSNEEVEFIFQMWMSKHGKTYTNALGEKERRFQNFKDNLRFIDQHNAKNLSYQLGLTRFADLTVQEYRDLFPGSPKPKQRNLKTSRRYVPLAGDQLPESVDWRQEGAVSEIKDQGTCNSCWAFSTVAAVEGLNKIVTGELISLSEQELVDCNLVNNGCYGSGLMDTAFQFLINNNGLDSEKDYPYQGTQGSCNRKQSTSNKVITIDSYEDVPANDEISLQKAVAHQPVSVGVDKKSQEFMLYRSCIYNGPCGTNLDHALVIVGYGSENGQDYWIVRNSWGTTWGDAGYIKIARNFEDPKGLCGIAMLASYPIKNSASNA.

Residues M1–A26 form the signal peptide. Residues M27 to Q132 constitute a propeptide, activation peptide. N-linked (GlcNAc...) asparagine glycosylation is found at N37 and N86. Intrachain disulfides connect C154/C195, C188/C229, and C288/C339. The active site involves C157. Residues H294 and N314 contribute to the active site.

The protein belongs to the peptidase C1 family.

In terms of biological role, probable thiol protease. The protein is Probable cysteine protease RDL6 of Arabidopsis thaliana (Mouse-ear cress).